A 194-amino-acid polypeptide reads, in one-letter code: Molybdenum cofactor guanylyltransferase (194 aa).

GTP-binding positions include 12-14 (LAG), lysine 25, asparagine 53, aspartate 70, and aspartate 100. Aspartate 100 lines the Mg(2+) pocket.

The protein belongs to the MobA family. Monomer. It depends on Mg(2+) as a cofactor.

It is found in the cytoplasm. The catalysed reaction is Mo-molybdopterin + GTP + H(+) = Mo-molybdopterin guanine dinucleotide + diphosphate. Functionally, transfers a GMP moiety from GTP to Mo-molybdopterin (Mo-MPT) cofactor (Moco or molybdenum cofactor) to form Mo-molybdopterin guanine dinucleotide (Mo-MGD) cofactor. This Aliivibrio salmonicida (strain LFI1238) (Vibrio salmonicida (strain LFI1238)) protein is Molybdenum cofactor guanylyltransferase.